A 71-amino-acid chain; its full sequence is Brevinin-1SN1 (71 aa).

The first 22 residues, 1–22 (MFTMKKPLLLLFFLGTINLSLC), serve as a signal peptide directing secretion. The propeptide at 23–45 (EEERNADEEEKRDGDDEMDAEVE) is removed in mature form. Cysteines 65 and 71 form a disulfide.

Belongs to the frog skin active peptide (FSAP) family. Brevinin subfamily. As to expression, expressed by the skin glands.

The protein localises to the secreted. Antimicrobial peptide. Active against some Gram-negative and a variety of Gram-positive bacterial strains. Active against fungus C.glabrata 090902 but not against C.albicans ATCC 10231. Shows hemolytic activity against human erythrocytes. The protein is Brevinin-1SN1 of Sylvirana spinulosa (Fine-spined frog).